Consider the following 236-residue polypeptide: MNSLSYLNHELERFPSPEYALTDPNGLLAIGGDLHPTRLLNAYYEGIFPWFNADDPILWWSPDPRAVFVPGTMKASRSLIKSLKKQTWTFTINRAFKEVMIGCAAPRAAQDGTWITQDIQHAYLELHKQGLAHSVEVWDEETLIGGLYGLAIGQVFCGESMFHTQTNASKAAMLVLHQYLLKQGFKLIDAQVVNPHLESLGATALKRKDFINLLKRFRDGKVASNSWVVKEVFLEL.

Belongs to the L/F-transferase family.

It localises to the cytoplasm. The catalysed reaction is N-terminal L-lysyl-[protein] + L-leucyl-tRNA(Leu) = N-terminal L-leucyl-L-lysyl-[protein] + tRNA(Leu) + H(+). It carries out the reaction N-terminal L-arginyl-[protein] + L-leucyl-tRNA(Leu) = N-terminal L-leucyl-L-arginyl-[protein] + tRNA(Leu) + H(+). It catalyses the reaction L-phenylalanyl-tRNA(Phe) + an N-terminal L-alpha-aminoacyl-[protein] = an N-terminal L-phenylalanyl-L-alpha-aminoacyl-[protein] + tRNA(Phe). Functionally, functions in the N-end rule pathway of protein degradation where it conjugates Leu, Phe and, less efficiently, Met from aminoacyl-tRNAs to the N-termini of proteins containing an N-terminal arginine or lysine. The protein is Leucyl/phenylalanyl-tRNA--protein transferase of Shewanella sediminis (strain HAW-EB3).